A 312-amino-acid polypeptide reads, in one-letter code: Malate dehydrogenase (312 aa).

Residues 12–17 and Asp36 each bind NAD(+); that span reads GAGFTG. Residues Arg87 and Arg93 each contribute to the substrate site. NAD(+)-binding positions include Asn100 and 123 to 125; that span reads LTN. Residue Asn125 participates in substrate binding. A Phosphoserine modification is found at Ser149. Arg156 contributes to the substrate binding site. His180 acts as the Proton acceptor in catalysis.

It belongs to the LDH/MDH superfamily. MDH type 3 family.

The catalysed reaction is (S)-malate + NAD(+) = oxaloacetate + NADH + H(+). In terms of biological role, catalyzes the reversible oxidation of malate to oxaloacetate. The sequence is that of Malate dehydrogenase from Bacillus cereus (strain ZK / E33L).